The chain runs to 140 residues: Extracellular globin-1 (140 aa).

One can recognise a Globin domain in the interval 1-140 (ECDVLERFKV…YDFIASGIKP (140 aa)). Residues C2 and C130 are joined by a disulfide bond. H93 serves as a coordination point for heme b.

The protein belongs to the globin family. The giant hemoglobins of worms are formed of a monomeric subunit and a disulfide-bonded trimer. This subunit is monomeric.

The protein resides in the secreted. This chain is Extracellular globin-1, found in Metaphire hilgendorfi (Earthworm).